Here is a 449-residue protein sequence, read N- to C-terminus: Glutamyl-tRNA reductase (449 aa).

Substrate contacts are provided by residues 49 to 52, Ser-109, 114 to 116, and Gln-120; these read TCNR and ETQ. Residue Cys-50 is the Nucleophile of the active site. Residue 189–194 participates in NADP(+) binding; it reads GAGKMS. The segment at 427-449 is disordered; sequence NFTHPREEMEESDEKRSYCGESR.

It belongs to the glutamyl-tRNA reductase family. In terms of assembly, homodimer.

The enzyme catalyses (S)-4-amino-5-oxopentanoate + tRNA(Glu) + NADP(+) = L-glutamyl-tRNA(Glu) + NADPH + H(+). Its pathway is porphyrin-containing compound metabolism; protoporphyrin-IX biosynthesis; 5-aminolevulinate from L-glutamyl-tRNA(Glu): step 1/2. Catalyzes the NADPH-dependent reduction of glutamyl-tRNA(Glu) to glutamate 1-semialdehyde (GSA). The sequence is that of Glutamyl-tRNA reductase from Carboxydothermus hydrogenoformans (strain ATCC BAA-161 / DSM 6008 / Z-2901).